The following is a 1439-amino-acid chain: Mediator of RNA polymerase II transcription subunit 23 (1439 aa).

A coiled-coil region spans residues 282–318; sequence SQMLNLQKHQKQRYNALEEQLVNLIVQAMEMTEANDA. The tract at residues 358–625 is interaction with Hsf; the sequence is HIVLALHEKL…HHVPTHYRVQ (268 aa). Disordered stretches follow at residues 1338 to 1372 and 1401 to 1439; these read NDNT…QQQQ and SVPL…MRHN. Low complexity-rich tracts occupy residues 1348-1372 and 1411-1439; these read SQTQ…QQQQ and QQQQ…MRHN.

It belongs to the Mediator complex subunit 23 family. Component of the Mediator complex. Interacts with Hsf.

It localises to the nucleus. Functionally, component of the Mediator complex, a coactivator involved in the regulated transcription of nearly all RNA polymerase II-dependent genes. Mediator functions as a bridge to convey information from gene-specific regulatory proteins to the basal RNA polymerase II transcription machinery. Mediator is recruited to promoters by direct interactions with regulatory proteins and serves as a scaffold for the assembly of a functional preinitiation complex with RNA polymerase II and the general transcription factors. Required for transcriptional activation in response to heat shock. The protein is Mediator of RNA polymerase II transcription subunit 23 (MED23) of Drosophila melanogaster (Fruit fly).